The sequence spans 271 residues: 5-deoxy-glucuronate isomerase (271 aa).

This sequence belongs to the isomerase IolB family.

It carries out the reaction 5-deoxy-D-glucuronate = 5-dehydro-2-deoxy-D-gluconate. The protein operates within polyol metabolism; myo-inositol degradation into acetyl-CoA; acetyl-CoA from myo-inositol: step 4/7. Its function is as follows. Involved in the isomerization of 5-deoxy-glucuronate (5DG) to 5-dehydro-2-deoxy-D-gluconate (DKG or 2-deoxy-5-keto-D-gluconate). This chain is 5-deoxy-glucuronate isomerase, found in Bacillus licheniformis (strain ATCC 14580 / DSM 13 / JCM 2505 / CCUG 7422 / NBRC 12200 / NCIMB 9375 / NCTC 10341 / NRRL NRS-1264 / Gibson 46).